A 241-amino-acid polypeptide reads, in one-letter code: Pyridoxine 5'-phosphate synthase (241 aa).

N7 is a 3-amino-2-oxopropyl phosphate binding site. 9-10 (DH) serves as a coordination point for 1-deoxy-D-xylulose 5-phosphate. R18 serves as a coordination point for 3-amino-2-oxopropyl phosphate. The active-site Proton acceptor is H43. Residues R45 and H50 each coordinate 1-deoxy-D-xylulose 5-phosphate. Residue E70 is the Proton acceptor of the active site. T100 is a binding site for 1-deoxy-D-xylulose 5-phosphate. The Proton donor role is filled by H191. 3-amino-2-oxopropyl phosphate contacts are provided by residues G192 and 213–214 (GH).

It belongs to the PNP synthase family. As to quaternary structure, homooctamer; tetramer of dimers.

Its subcellular location is the cytoplasm. It carries out the reaction 3-amino-2-oxopropyl phosphate + 1-deoxy-D-xylulose 5-phosphate = pyridoxine 5'-phosphate + phosphate + 2 H2O + H(+). Its pathway is cofactor biosynthesis; pyridoxine 5'-phosphate biosynthesis; pyridoxine 5'-phosphate from D-erythrose 4-phosphate: step 5/5. Its function is as follows. Catalyzes the complicated ring closure reaction between the two acyclic compounds 1-deoxy-D-xylulose-5-phosphate (DXP) and 3-amino-2-oxopropyl phosphate (1-amino-acetone-3-phosphate or AAP) to form pyridoxine 5'-phosphate (PNP) and inorganic phosphate. The polypeptide is Pyridoxine 5'-phosphate synthase (Nitrosospira multiformis (strain ATCC 25196 / NCIMB 11849 / C 71)).